The primary structure comprises 484 residues: Protein nucleotidyltransferase YdiU (484 aa).

Positions 81, 83, 84, 103, 115, 116, 166, and 173 each coordinate ATP. Aspartate 244 serves as the catalytic Proton acceptor. 2 residues coordinate Mg(2+): asparagine 245 and aspartate 254. Aspartate 254 provides a ligand contact to ATP.

It belongs to the SELO family. Requires Mg(2+) as cofactor. Mn(2+) serves as cofactor.

It carries out the reaction L-seryl-[protein] + ATP = 3-O-(5'-adenylyl)-L-seryl-[protein] + diphosphate. The catalysed reaction is L-threonyl-[protein] + ATP = 3-O-(5'-adenylyl)-L-threonyl-[protein] + diphosphate. It catalyses the reaction L-tyrosyl-[protein] + ATP = O-(5'-adenylyl)-L-tyrosyl-[protein] + diphosphate. The enzyme catalyses L-histidyl-[protein] + UTP = N(tele)-(5'-uridylyl)-L-histidyl-[protein] + diphosphate. It carries out the reaction L-seryl-[protein] + UTP = O-(5'-uridylyl)-L-seryl-[protein] + diphosphate. The catalysed reaction is L-tyrosyl-[protein] + UTP = O-(5'-uridylyl)-L-tyrosyl-[protein] + diphosphate. Nucleotidyltransferase involved in the post-translational modification of proteins. It can catalyze the addition of adenosine monophosphate (AMP) or uridine monophosphate (UMP) to a protein, resulting in modifications known as AMPylation and UMPylation. This Shewanella baltica (strain OS195) protein is Protein nucleotidyltransferase YdiU.